Consider the following 737-residue polypeptide: Ribosome-releasing factor 2, mitochondrial (737 aa).

The transit peptide at 1–29 directs the protein to the mitochondrion; the sequence is MLKYALHSGGMPRNRLLRQLSAHIFRRSY. The region spanning 31-310 is the tr-type G domain; that stretch reads SNIRNIGILA…AVNTYLPAPE (280 aa). GTP contacts are provided by residues 40-47, 104-108, and 158-161; these read AHIDAGKT, DTPGH, and NKMD.

Belongs to the TRAFAC class translation factor GTPase superfamily. Classic translation factor GTPase family. EF-G/EF-2 subfamily.

The protein resides in the mitochondrion. Mitochondrial GTPase that mediates the disassembly of ribosomes from messenger RNA at the termination of mitochondrial protein biosynthesis. Not involved in the GTP-dependent ribosomal translocation step during translation elongation. This Drosophila pseudoobscura pseudoobscura (Fruit fly) protein is Ribosome-releasing factor 2, mitochondrial.